A 975-amino-acid chain; its full sequence is Glycine dehydrogenase (decarboxylating) (975 aa).

Residue Lys702 is modified to N6-(pyridoxal phosphate)lysine.

It belongs to the GcvP family. As to quaternary structure, the glycine cleavage system is composed of four proteins: P, T, L and H. It depends on pyridoxal 5'-phosphate as a cofactor.

The enzyme catalyses N(6)-[(R)-lipoyl]-L-lysyl-[glycine-cleavage complex H protein] + glycine + H(+) = N(6)-[(R)-S(8)-aminomethyldihydrolipoyl]-L-lysyl-[glycine-cleavage complex H protein] + CO2. In terms of biological role, the glycine cleavage system catalyzes the degradation of glycine. The P protein binds the alpha-amino group of glycine through its pyridoxal phosphate cofactor; CO(2) is released and the remaining methylamine moiety is then transferred to the lipoamide cofactor of the H protein. This is Glycine dehydrogenase (decarboxylating) from Xanthomonas campestris pv. campestris (strain 8004).